A 701-amino-acid polypeptide reads, in one-letter code: Polyribonucleotide nucleotidyltransferase (701 aa).

Mg(2+) is bound by residues Asp485 and Asp491. The region spanning 552-611 is the KH domain; the sequence is PRIIKIRINPEKIRDVIGKGGAVIRALTEETGTTIDITDDGTVMIACVNAEGGELAKKRI. An S1 motif domain is found at 621-689; sequence GRVYDGTVLK…DKGRLRLSMK (69 aa).

Belongs to the polyribonucleotide nucleotidyltransferase family. Mg(2+) is required as a cofactor.

The protein localises to the cytoplasm. It carries out the reaction RNA(n+1) + phosphate = RNA(n) + a ribonucleoside 5'-diphosphate. In terms of biological role, involved in mRNA degradation. Catalyzes the phosphorolysis of single-stranded polyribonucleotides processively in the 3'- to 5'-direction. In Nitrosospira multiformis (strain ATCC 25196 / NCIMB 11849 / C 71), this protein is Polyribonucleotide nucleotidyltransferase.